The chain runs to 732 residues: Catalase-peroxidase (732 aa).

The disordered stretch occupies residues 1–26 (MADNKKSPETGGITMQIPGKGRTNRD). The segment at residues 96–219 (WHSAGTYRTF…LAAVQMGLIY (124 aa)) is a cross-link (tryptophyl-tyrosyl-methioninium (Trp-Tyr) (with M-245)). Residue histidine 97 is the Proton acceptor of the active site. The segment at residues 219–245 (YVNPEGPDGNPDPVAAARDIREVFARM) is a cross-link (tryptophyl-tyrosyl-methioninium (Tyr-Met) (with W-96)). Histidine 260 is a binding site for heme b. The tract at residues 344-365 (KPKGEAGAGTVPDPHDPKKRHA) is disordered.

Belongs to the peroxidase family. Peroxidase/catalase subfamily. In terms of assembly, homodimer or homotetramer. The cofactor is heme b. Formation of the three residue Trp-Tyr-Met cross-link is important for the catalase, but not the peroxidase activity of the enzyme.

It catalyses the reaction H2O2 + AH2 = A + 2 H2O. It carries out the reaction 2 H2O2 = O2 + 2 H2O. Bifunctional enzyme with both catalase and broad-spectrum peroxidase activity. The polypeptide is Catalase-peroxidase (Methanospirillum hungatei JF-1 (strain ATCC 27890 / DSM 864 / NBRC 100397 / JF-1)).